We begin with the raw amino-acid sequence, 575 residues long: Alpha-(1,6)-fucosyltransferase (575 aa).

Over 1–9 (MRPWTGSWR) the chain is Cytoplasmic. A helical; Signal-anchor for type II membrane protein membrane pass occupies residues 10-30 (WIMLILFAWGTLLFYIGGHLV). Residues 31 to 575 (RDNDHPDHSS…KVPHVPEAEK (545 aa)) lie on the Lumenal side of the membrane. Disulfide bonds link Cys-204–Cys-266, Cys-212–Cys-230, and Cys-218–Cys-222. In terms of domain architecture, GT23 spans 206–493 (KAKKLVCNIN…PDASANFHSL (288 aa)). Ser-278 is modified (phosphoserine). The short motif at 299 to 305 (PRPPYLP) is the SH3-binding element. The segment at 365–366 (RR) is important for donor substrate binding. Cysteines 465 and 472 form a disulfide. Residues 502–563 (QNAHNQIAIY…PSYKVREKIE (62 aa)) enclose the SH3 domain.

It belongs to the glycosyltransferase 23 family. In terms of processing, tyrosine phosphorylated by PKDCC/VLK. Highest expression found in brain. Also found in heart, lung, spleen and kidney.

The protein localises to the golgi apparatus. Its subcellular location is the golgi stack membrane. The enzyme catalyses N(4)-{beta-D-GlcNAc-(1-&gt;2)-alpha-D-Man-(1-&gt;3)-[beta-D-GlcNAc-(1-&gt;2)-alpha-D-Man-(1-&gt;6)]-beta-D-Man-(1-&gt;4)-beta-D-GlcNAc-(1-&gt;4)-beta-D-GlcNAc}-L-asparaginyl-[protein] + GDP-beta-L-fucose = an N(4)-{beta-D-GlcNAc-(1-&gt;2)-alpha-D-Man-(1-&gt;3)-[beta-D-GlcNAc-(1-&gt;2)-alpha-D-Man-(1-&gt;6)]-beta-D-Man-(1-&gt;4)-beta-D-GlcNAc-(1-&gt;4)-[alpha-L-Fuc-(1-&gt;6)]-beta-D-GlcNAc}-L-asparaginyl-[protein] + GDP + H(+). The protein operates within protein modification; protein glycosylation. In terms of biological role, catalyzes the addition of fucose in alpha 1-6 linkage to the first GlcNAc residue, next to the peptide chains in N-glycans. This Bos taurus (Bovine) protein is Alpha-(1,6)-fucosyltransferase (FUT8).